Consider the following 475-residue polypeptide: Zinc finger protein 296 (475 aa).

The segment at Met1–Ala78 is disordered. Residue Lys35 forms a Glycyl lysine isopeptide (Lys-Gly) (interchain with G-Cter in SUMO2) linkage. 3 consecutive C2H2-type zinc fingers follow at residues Leu157–His180, Pro231–His253, and Tyr259–His281. Residues Asn275–Gly385 are disordered. Composition is skewed to low complexity over residues Ser295 to Pro313 and Gly326 to Ala338. Residues Pro339–Thr351 show a composition bias toward gly residues. Positions Ala354–Gln367 are enriched in polar residues. C2H2-type zinc fingers lie at residues Gly386–His408, Tyr414–His436, and Phe445–His468.

This sequence belongs to the krueppel C2H2-type zinc-finger protein family. Interacts with KLF4.

It is found in the nucleus. In terms of biological role, may be a transcriptional corepressor with KLF4. The sequence is that of Zinc finger protein 296 (ZNF296) from Homo sapiens (Human).